Reading from the N-terminus, the 227-residue chain is GFP-like non-fluorescent chromoprotein (227 aa).

Residues 63 to 65 (EYG) constitute a cross-link (2-iminomethyl-5-imidazolinone (Glu-Gly)). A 2,3-didehydrotyrosine modification is found at Tyr-64.

It belongs to the GFP family. Homotetramer. Contains a chromophore consisting of modified amino acid residues. The chromophore is formed by autocatalytic backbone condensation between Xaa-N and Gly-(N+2), oxidation of Tyr-(N+1) to didehydrotyrosine, and formation of a double bond to the alpha-amino nitrogen of residue Xaa-N. Maturation of the chromophore requires nothing other than molecular oxygen. The precise stereochemistry of the tyrosine has not been determined.

Its function is as follows. Non-fluorescent pigment protein that is lilac in color. This chain is GFP-like non-fluorescent chromoprotein, found in Radianthus crispa (Leathery sea anemone).